Here is a 336-residue protein sequence, read N- to C-terminus: Fructose-1,6-bisphosphatase class 1 (336 aa).

Mg(2+)-binding residues include glutamate 90, aspartate 112, leucine 114, and aspartate 115. Residues 115–118 (DGSS), asparagine 211, and lysine 277 each bind substrate. Residue glutamate 283 coordinates Mg(2+).

It belongs to the FBPase class 1 family. In terms of assembly, homotetramer. Mg(2+) is required as a cofactor.

The protein localises to the cytoplasm. It carries out the reaction beta-D-fructose 1,6-bisphosphate + H2O = beta-D-fructose 6-phosphate + phosphate. It functions in the pathway carbohydrate biosynthesis; gluconeogenesis. This Pseudomonas fluorescens (strain SBW25) protein is Fructose-1,6-bisphosphatase class 1.